The primary structure comprises 304 residues: Acetyl-coenzyme A carboxylase carboxyl transferase subunit beta (304 aa).

Positions 26–295 (VWTKCTSCEQ…PFVEPELVEN (270 aa)) constitute a CoA carboxyltransferase N-terminal domain. Residues cysteine 30, cysteine 33, cysteine 49, and cysteine 52 each coordinate Zn(2+). The C4-type zinc finger occupies 30 to 52 (CTSCEQVLYRDELRRHLEVCPKC). The segment at 281–304 (SNKPSPFVEPELVENEEQSKSDNE) is disordered.

The protein belongs to the AccD/PCCB family. As to quaternary structure, acetyl-CoA carboxylase is a heterohexamer composed of biotin carboxyl carrier protein (AccB), biotin carboxylase (AccC) and two subunits each of ACCase subunit alpha (AccA) and ACCase subunit beta (AccD). The cofactor is Zn(2+).

The protein localises to the cytoplasm. It catalyses the reaction N(6)-carboxybiotinyl-L-lysyl-[protein] + acetyl-CoA = N(6)-biotinyl-L-lysyl-[protein] + malonyl-CoA. The protein operates within lipid metabolism; malonyl-CoA biosynthesis; malonyl-CoA from acetyl-CoA: step 1/1. Component of the acetyl coenzyme A carboxylase (ACC) complex. Biotin carboxylase (BC) catalyzes the carboxylation of biotin on its carrier protein (BCCP) and then the CO(2) group is transferred by the transcarboxylase to acetyl-CoA to form malonyl-CoA. In Pasteurella multocida (strain Pm70), this protein is Acetyl-coenzyme A carboxylase carboxyl transferase subunit beta.